Reading from the N-terminus, the 183-residue chain is Capsid protein (183 aa).

The interval 143–183 is disordered; that stretch reads LPETTVVRRRGRSPRRRTPSPRRRRSQSPRRRRSQSRESQC. Basic residues predominate over residues 149–176; that stretch reads VRRRGRSPRRRTPSPRRRRSQSPRRRRS. Phosphoserine; by host is present on residues serine 155, serine 162, and serine 170. The 1; half-length repeat unit spans residues 155–161; it reads SPRRRTP. The 3 X 8 AA repeats of S-P-R-R-R-[PR]-S-Q stretch occupies residues 155-177; the sequence is SPRRRTPSPRRRRSQSPRRRRSQ. The Bipartite nuclear localization signal signature appears at 158–175; the sequence is RRTPSPRRRRSQSPRRRR. Repeat copies occupy residues 162–169 and 170–177. The RNA binding stretch occupies residues 177–183; it reads QSRESQC.

It belongs to the orthohepadnavirus core antigen family. As to quaternary structure, homodimerizes, then multimerizes. Interacts with cytosol exposed regions of viral L glycoprotein present in the reticulum-to-Golgi compartment. Interacts with human FLNB. Phosphorylated form interacts with host importin alpha; this interaction depends on the exposure of the NLS, which itself depends upon genome maturation and/or phosphorylation of the capsid protein. Interacts with host NUP153. Phosphorylated by host SRPK1, SRPK2, and maybe protein kinase C or GAPDH. Phosphorylation is critical for pregenomic RNA packaging. Protein kinase C phosphorylation is stimulated by HBx protein and may play a role in transport of the viral genome to the nucleus at the late step during the viral replication cycle.

Its subcellular location is the virion. The protein localises to the host cytoplasm. Functionally, self assembles to form an icosahedral capsid. Most capsids appear to be large particles with an icosahedral symmetry of T=4 and consist of 240 copies of capsid protein, though a fraction forms smaller T=3 particles consisting of 180 capsid proteins. Entering capsids are transported along microtubules to the nucleus. Phosphorylation of the capsid is thought to induce exposure of nuclear localization signal in the C-terminal portion of the capsid protein that allows binding to the nuclear pore complex via the importin (karyopherin-) alpha and beta. Capsids are imported in intact form through the nuclear pore into the nuclear basket, where it probably binds NUP153. Only capsids that contain the mature viral genome can release the viral DNA and capsid protein into the nucleoplasm. Immature capsids get stuck in the basket. Capsids encapsulate the pre-genomic RNA and the P protein. Pre-genomic RNA is reverse-transcribed into DNA while the capsid is still in the cytoplasm. The capsid can then either be directed to the nucleus, providing more genomes for transcription, or bud through the endoplasmic reticulum to provide new virions. This chain is Capsid protein, found in Homo sapiens (Human).